Here is a 667-residue protein sequence, read N- to C-terminus: Increased rDNA silencing protein 4 (667 aa).

Composition is skewed to polar residues over residues 1–10 (MSAGQSTSQA), 18–33 (SISTHPKTDQNPSKVH), and 46–61 (GRLTNSRNATAVNAIN). Disordered stretches follow at residues 1-123 (MSAG…PSNM), 133-152 (AKRHASEAKRLAQENQPSDM), 234-441 (SSFE…SDFE), and 459-488 (HQKSQHVQLKTTMRDSKKKKKDKKSFDVDK). Over residues 81–91 (HETKKNVENNR) the composition is skewed to basic and acidic residues. Residues 92–109 (QRSSSPSPLYRTTTPKQM) show a composition bias toward polar residues. Over residues 110-121 (TSPSTSSASLPS) the composition is skewed to low complexity. The segment covering 133 to 144 (AKRHASEAKRLA) has biased composition (basic and acidic residues). A compositionally biased stretch (polar residues) spans 234–248 (SSFESVPSAYSNPDS). The segment covering 276 to 289 (SPREDSDIDQERRN) has biased composition (basic and acidic residues). The segment covering 298–312 (SSNACARSANSAGSA) has biased composition (low complexity). Over residues 325–335 (QVEKEKNEDKN) the composition is skewed to basic and acidic residues. A compositionally biased stretch (low complexity) spans 358–371 (SDSSSLNPGSSRSS). Polar residues-rich tracts occupy residues 376-394 (SYSTDNESMGRNRMGSNDS) and 424-437 (SNQNVGKMTESGSE). One can recognise an EH domain in the interval 568–661 (GGYQSAEFHN…ESLEGIGVSV (94 aa)).

Belongs to the IRS4 family.

In terms of biological role, positive regulator of phosphatidylinositol 4,5-bisphosphate turnover and negatively regulates signaling through the cell integrity pathway. Involved in rDNA silencing. This chain is Increased rDNA silencing protein 4 (IRS4), found in Meyerozyma guilliermondii (strain ATCC 6260 / CBS 566 / DSM 6381 / JCM 1539 / NBRC 10279 / NRRL Y-324) (Yeast).